The sequence spans 325 residues: Elongation factor P--(R)-beta-lysine ligase (325 aa).

Position 76–78 (76–78) interacts with substrate; that stretch reads SPE. Residues 100-102 and Asn-109 contribute to the ATP site; that span reads RNE. Tyr-118 contributes to the substrate binding site. 244–245 lines the ATP pocket; sequence EL. Residue Glu-251 coordinates substrate. An ATP-binding site is contributed by Gly-300.

Belongs to the class-II aminoacyl-tRNA synthetase family. EpmA subfamily. In terms of assembly, homodimer.

It carries out the reaction D-beta-lysine + L-lysyl-[protein] + ATP = N(6)-((3R)-3,6-diaminohexanoyl)-L-lysyl-[protein] + AMP + diphosphate + H(+). Functionally, with EpmB is involved in the beta-lysylation step of the post-translational modification of translation elongation factor P (EF-P). Catalyzes the ATP-dependent activation of (R)-beta-lysine produced by EpmB, forming a lysyl-adenylate, from which the beta-lysyl moiety is then transferred to the epsilon-amino group of a conserved specific lysine residue in EF-P. This Pectobacterium carotovorum subsp. carotovorum (strain PC1) protein is Elongation factor P--(R)-beta-lysine ligase.